The chain runs to 147 residues: AP-2 complex subunit sigma (147 aa).

The protein belongs to the adaptor complexes small subunit family. In terms of assembly, adaptor protein complex 2 (AP-2) is a heterotetramer composed of two large adaptins (alpha-type subunit APL3 and beta-type subunit APL1), a medium chain (mu-type subunit APM4) and a small adaptin (sigma-type subunit APS2). Interacts with APL1.

It is found in the cell membrane. Its subcellular location is the membrane. The protein resides in the coated pit. Its function is as follows. Component of the adaptor complexes which link clathrin to receptors in coated vesicles. Clathrin-associated protein complexes are believed to interact with the cytoplasmic tails of membrane proteins, leading to their selection and concentration. This is AP-2 complex subunit sigma (APS2) from Saccharomyces cerevisiae (strain ATCC 204508 / S288c) (Baker's yeast).